The following is a 476-amino-acid chain: Protein Cep89 homolog (476 aa).

Disordered stretches follow at residues 1 to 29 (MSTR…KKNR) and 172 to 193 (LGEG…APYP). Residues 180–190 (GGSTKVSSSSA) show a composition bias toward polar residues.

It localises to the cytoplasm. The protein localises to the cytosol. It is found in the mitochondrion intermembrane space. Functionally, required for mitochondrial complex IV activity. May be involved in non-associative learning. The sequence is that of Protein Cep89 homolog (Cep89) from Drosophila melanogaster (Fruit fly).